A 441-amino-acid chain; its full sequence is ATP-dependent protease ATPase subunit HslU (441 aa).

ATP-binding positions include isoleucine 18, 60–65 (GVGKTE), aspartate 254, glutamate 319, and arginine 391.

This sequence belongs to the ClpX chaperone family. HslU subfamily. As to quaternary structure, a double ring-shaped homohexamer of HslV is capped on each side by a ring-shaped HslU homohexamer. The assembly of the HslU/HslV complex is dependent on binding of ATP.

Its subcellular location is the cytoplasm. ATPase subunit of a proteasome-like degradation complex; this subunit has chaperone activity. The binding of ATP and its subsequent hydrolysis by HslU are essential for unfolding of protein substrates subsequently hydrolyzed by HslV. HslU recognizes the N-terminal part of its protein substrates and unfolds these before they are guided to HslV for hydrolysis. The sequence is that of ATP-dependent protease ATPase subunit HslU from Shewanella loihica (strain ATCC BAA-1088 / PV-4).